The primary structure comprises 311 residues: Nod factor export ATP-binding protein I (311 aa).

Residues 13-243 (IDLAGVSKSY…QIGCPVIEIY (231 aa)) form the ABC transporter domain. 45-52 (GPNGAGKS) contributes to the ATP binding site.

Belongs to the ABC transporter superfamily. Lipooligosaccharide exporter (TC 3.A.1.102) family. In terms of assembly, the complex is composed of two ATP-binding proteins (NodI) and two transmembrane proteins (NodJ).

The protein resides in the cell inner membrane. In terms of biological role, part of the ABC transporter complex NodIJ involved in the export of the nodulation factors (Nod factors), the bacterial signal molecules that induce symbiosis and subsequent nodulation induction. Nod factors are LCO (lipo-chitin oligosaccharide), a modified beta-1,4-linked N-acetylglucosamine oligosaccharide. This subunit is responsible for energy coupling to the transport system. This chain is Nod factor export ATP-binding protein I, found in Rhizobium leguminosarum bv. viciae.